A 359-amino-acid chain; its full sequence is Protein RecA (359 aa).

Position 74–81 (74–81 (GPESSGKT)) interacts with ATP.

This sequence belongs to the RecA family.

The protein localises to the cytoplasm. Can catalyze the hydrolysis of ATP in the presence of single-stranded DNA, the ATP-dependent uptake of single-stranded DNA by duplex DNA, and the ATP-dependent hybridization of homologous single-stranded DNAs. It interacts with LexA causing its activation and leading to its autocatalytic cleavage. In Anaplasma marginale (strain Florida), this protein is Protein RecA.